The sequence spans 520 residues: Flavin-dependent halogenase radH (520 aa).

Gly-14, Ala-17, and Glu-47 together coordinate FAD. 2 residues coordinate chloride: Ser-330 and Gly-331.

The protein belongs to the flavin-dependent halogenase family.

Its pathway is secondary metabolite biosynthesis. Its function is as follows. Non-heme halogenase; part of the gene cluster that mediates the biosynthesis of radicicol, a resorcylic acid lactone (RAL) that irreversibly inhibits the HSP90 molecular chaperone, an important target for cancer chemotherapy. The cluster encodes only two apparent post-PKS enzymes, a cytochrome P450 monooxygenase (radP) and a non-heme halogenase (radH) that introduce the epoxide and the chlorine, respectively. If this cluster includes all the genes required for radicicol biosynthesis, the remaining structural features of radicicol are presumably generated by the PKSs rads1 and rads2. The C-2' ketone could arise if the R-PKS rads1 and NR-PKS rads2 each carry out four iterations, in contrast to the five iteration-three iteration split for the hypothemycin PKSs. The origin of the cis 5',6' double bond is not known. The radicicol R-PKS rads1 ER domain may catalyze either double bond isomerization or reduction in the third iteration. The chain is Flavin-dependent halogenase radH from Floropilus chiversii (Chaetomium chiversii).